The primary structure comprises 380 residues: Queuine tRNA-ribosyltransferase (380 aa).

The active-site Proton acceptor is the D96. Substrate is bound by residues 96-100 (DSGGF), D150, Q193, and G220. Residues 251 to 257 (GVGAPDS) are RNA binding. The Nucleophile role is filled by D270. The interval 275–279 (TRIAR) is RNA binding; important for wobble base 34 recognition. Residues C308, C310, C313, and H339 each coordinate Zn(2+).

This sequence belongs to the queuine tRNA-ribosyltransferase family. As to quaternary structure, homodimer. Within each dimer, one monomer is responsible for RNA recognition and catalysis, while the other monomer binds to the replacement base PreQ1. The cofactor is Zn(2+).

It carries out the reaction 7-aminomethyl-7-carbaguanine + guanosine(34) in tRNA = 7-aminomethyl-7-carbaguanosine(34) in tRNA + guanine. The protein operates within tRNA modification; tRNA-queuosine biosynthesis. In terms of biological role, catalyzes the base-exchange of a guanine (G) residue with the queuine precursor 7-aminomethyl-7-deazaguanine (PreQ1) at position 34 (anticodon wobble position) in tRNAs with GU(N) anticodons (tRNA-Asp, -Asn, -His and -Tyr). Catalysis occurs through a double-displacement mechanism. The nucleophile active site attacks the C1' of nucleotide 34 to detach the guanine base from the RNA, forming a covalent enzyme-RNA intermediate. The proton acceptor active site deprotonates the incoming PreQ1, allowing a nucleophilic attack on the C1' of the ribose to form the product. After dissociation, two additional enzymatic reactions on the tRNA convert PreQ1 to queuine (Q), resulting in the hypermodified nucleoside queuosine (7-(((4,5-cis-dihydroxy-2-cyclopenten-1-yl)amino)methyl)-7-deazaguanosine). The chain is Queuine tRNA-ribosyltransferase from Streptococcus pneumoniae (strain Hungary19A-6).